The sequence spans 310 residues: Fe-S cluster assembly protein dre2 (310 aa).

An N-terminal SAM-like domain region spans residues 1–130 (MSGRTLLLSP…KPDIEDMRAV (130 aa)). Residues 131–203 (PLRLGRKKHD…EDLLDGSELA (73 aa)) are linker. C212, C223, C226, and C228 together coordinate [2Fe-2S] cluster. Residues 212–228 (CRPKAGRRRRACKDCTC) are fe-S binding site A. C273, C276, C284, and C287 together coordinate [4Fe-4S] cluster. 2 consecutive short sequence motifs (cx2C motif) follow at residues 273 to 276 (CGNC) and 284 to 287 (CEGC). The tract at residues 273-287 (CGNCSLGDAFRCEGC) is fe-S binding site B.

It belongs to the anamorsin family. Monomer. Interacts with tah18. Interacts with mia40. The cofactor is [2Fe-2S] cluster. [4Fe-4S] cluster is required as a cofactor.

The protein localises to the cytoplasm. Its subcellular location is the mitochondrion intermembrane space. Functionally, component of the cytosolic iron-sulfur (Fe-S) protein assembly (CIA) machinery required for the maturation of extramitochondrial Fe-S proteins. Part of an electron transfer chain functioning in an early step of cytosolic Fe-S biogenesis, facilitating the de novo assembly of a [4Fe-4S] cluster on the scaffold complex cfd1-nbp35. Electrons are transferred to dre2 from NADPH via the FAD- and FMN-containing protein tah18. Tah18-dre2 are also required for the assembly of the diferric tyrosyl radical cofactor of ribonucleotide reductase (RNR), probably by providing electrons for reduction during radical cofactor maturation in the catalytic small subunit rnr2. This is Fe-S cluster assembly protein dre2 from Aspergillus clavatus (strain ATCC 1007 / CBS 513.65 / DSM 816 / NCTC 3887 / NRRL 1 / QM 1276 / 107).